Reading from the N-terminus, the 625-residue chain is Alpha-amylase 1 (625 aa).

A signal peptide spans 1 to 22 (MGFSKIALFSLFALFGLPTSLA). A disulfide bridge links Cys51 with Cys59. Residue Trp105 participates in substrate binding. Asn143 contributes to the Ca(2+) binding site. N-linked (GlcNAc...) asparagine glycans are attached at residues Asn153, Asn163, and Asn180. An intrachain disulfide couples Cys172 to Cys187. Residues Glu185 and Asp198 each contribute to the Ca(2+) site. Arg227 contacts substrate. Asp229 serves as a coordination point for Ca(2+). The Nucleophile role is filled by Asp229. 232-233 (KQ) contributes to the substrate binding site. An N-linked (GlcNAc...) asparagine glycan is attached at Asn241. Glu253 is a binding site for Ca(2+). Glu253 functions as the Proton donor in the catalytic mechanism. Residues Asn260 and Asn286 are each glycosylated (N-linked (GlcNAc...) asparagine). Cysteines 263 and 306 form a disulfide. Asp322 provides a ligand contact to substrate. Asn331 carries an N-linked (GlcNAc...) asparagine glycan. Arg370 is a binding site for substrate. Asn440 and Asn461 each carry an N-linked (GlcNAc...) asparagine glycan. The segment at 526 to 579 (SATSSSKSSSSSSSRSGSSSSSSSRSGSTSSSGSSHTITSTSQSVHTSGSSTST) is disordered. The GPI-anchor amidated serine moiety is linked to residue Ser603. Residues 604-625 (SANAVRVSILGVAAFIAIVLFI) constitute a propeptide, removed in mature form.

It belongs to the glycosyl hydrolase 13 family. It depends on Ca(2+) as a cofactor.

The protein localises to the cell membrane. It catalyses the reaction Endohydrolysis of (1-&gt;4)-alpha-D-glucosidic linkages in polysaccharides containing three or more (1-&gt;4)-alpha-linked D-glucose units.. The protein is Alpha-amylase 1 (aah1) of Schizosaccharomyces pombe (strain 972 / ATCC 24843) (Fission yeast).